A 104-amino-acid polypeptide reads, in one-letter code: Turripeptide OL55 (104 aa).

Post-translationally, contains 8 disulfide bonds. Expressed by the venom duct.

The protein localises to the secreted. Its function is as follows. Acts as a neurotoxin by inhibiting an ion channel. This Iotyrris olangoensis (Sea snail) protein is Turripeptide OL55.